Here is a 290-residue protein sequence, read N- to C-terminus: 33 kDa chaperonin (290 aa).

2 disulfide bridges follow: Cys235/Cys237 and Cys268/Cys271.

The protein belongs to the HSP33 family. Under oxidizing conditions two disulfide bonds are formed involving the reactive cysteines. Under reducing conditions zinc is bound to the reactive cysteines and the protein is inactive.

It localises to the cytoplasm. Its function is as follows. Redox regulated molecular chaperone. Protects both thermally unfolding and oxidatively damaged proteins from irreversible aggregation. Plays an important role in the bacterial defense system toward oxidative stress. This Streptococcus pyogenes serotype M49 protein is 33 kDa chaperonin.